The sequence spans 552 residues: Urocanate hydratase (552 aa).

NAD(+) is bound by residues 48-49 (GG), Q126, 172-174 (GMG), E192, R197, 238-239 (NA), 259-263 (QTSAH), 269-270 (YV), and Y318. Residue C406 is part of the active site. G488 contributes to the NAD(+) binding site.

It belongs to the urocanase family. The cofactor is NAD(+).

The protein resides in the cytoplasm. It carries out the reaction 4-imidazolone-5-propanoate = trans-urocanate + H2O. The protein operates within amino-acid degradation; L-histidine degradation into L-glutamate; N-formimidoyl-L-glutamate from L-histidine: step 2/3. Its function is as follows. Catalyzes the conversion of urocanate to 4-imidazolone-5-propionate. The sequence is that of Urocanate hydratase from Herpetosiphon aurantiacus (strain ATCC 23779 / DSM 785 / 114-95).